The sequence spans 666 residues: Zinc finger MYM-type protein 5 (666 aa).

Glycyl lysine isopeptide (Lys-Gly) (interchain with G-Cter in SUMO2) cross-links involve residues Lys-85, Lys-88, Lys-146, and Lys-163. A disordered region spans residues 87 to 106; that stretch reads EKPQGNYSVIPPPSRDLASQ. A disordered region spans residues 191 to 212; that stretch reads SPDSWISQSASFPRNQKQPGVD. Polar residues predominate over residues 194-208; that stretch reads SWISQSASFPRNQKQ. Lys-222 is covalently cross-linked (Glycyl lysine isopeptide (Lys-Gly) (interchain with G-Cter in SUMO2)). MYM-type zinc fingers lie at residues 262 to 296, 308 to 348, 355 to 390, and 401 to 428; these read HLFC…KKAD, QEFC…RHEV, HKLC…KSTG, and KRFC…ASEN. Glycyl lysine isopeptide (Lys-Gly) (interchain with G-Cter in SUMO2) cross-links involve residues Lys-440, Lys-452, Lys-459, and Lys-549.

Interacts (via N-terminal 120 amino acid region) with ETV5 (via C-terminal).

The protein localises to the nucleus. Functionally, functions as a transcriptional regulator. This chain is Zinc finger MYM-type protein 5 (ZMYM5), found in Macaca fascicularis (Crab-eating macaque).